The following is a 446-amino-acid chain: Enolase 1 (446 aa).

Residues histidine 164 and glutamate 173 each coordinate substrate. Glutamate 216 acts as the Proton donor in catalysis. Mg(2+) contacts are provided by aspartate 251, glutamate 302, and aspartate 329. Glutamate 302 and aspartate 329 together coordinate substrate. The Proton acceptor role is filled by lysine 354. Substrate is bound by residues 381-384 (SHRS) and lysine 405.

This sequence belongs to the enolase family. In terms of assembly, homodimer. It depends on Mg(2+) as a cofactor.

It is found in the cytoplasm. It catalyses the reaction (2R)-2-phosphoglycerate = phosphoenolpyruvate + H2O. The protein operates within carbohydrate degradation; glycolysis; pyruvate from D-glyceraldehyde 3-phosphate: step 4/5. The chain is Enolase 1 (ENO1) from Zea mays (Maize).